The chain runs to 100 residues: NAD(P)H-quinone oxidoreductase subunit 4L, chloroplastic (100 aa).

3 consecutive transmembrane segments (helical) span residues 1-21, 29-49, and 63-83; these read MFGH…YGLI, ALMC…TFPN, and VFVI…VLAI.

The protein belongs to the complex I subunit 4L family. NDH is composed of at least 16 different subunits, 5 of which are encoded in the nucleus.

The protein resides in the plastid. The protein localises to the chloroplast thylakoid membrane. It catalyses the reaction a plastoquinone + NADH + (n+1) H(+)(in) = a plastoquinol + NAD(+) + n H(+)(out). The enzyme catalyses a plastoquinone + NADPH + (n+1) H(+)(in) = a plastoquinol + NADP(+) + n H(+)(out). Its function is as follows. NDH shuttles electrons from NAD(P)H:plastoquinone, via FMN and iron-sulfur (Fe-S) centers, to quinones in the photosynthetic chain and possibly in a chloroplast respiratory chain. The immediate electron acceptor for the enzyme in this species is believed to be plastoquinone. Couples the redox reaction to proton translocation, and thus conserves the redox energy in a proton gradient. The protein is NAD(P)H-quinone oxidoreductase subunit 4L, chloroplastic of Huperzia lucidula (Shining clubmoss).